Reading from the N-terminus, the 192-residue chain is Fe/S biogenesis protein NfuA (192 aa).

The [4Fe-4S] cluster site is built by Cys-149 and Cys-152.

It belongs to the NfuA family. As to quaternary structure, homodimer. The cofactor is [4Fe-4S] cluster.

Involved in iron-sulfur cluster biogenesis. Binds a 4Fe-4S cluster, can transfer this cluster to apoproteins, and thereby intervenes in the maturation of Fe/S proteins. Could also act as a scaffold/chaperone for damaged Fe/S proteins. In Shewanella sp. (strain MR-7), this protein is Fe/S biogenesis protein NfuA.